The primary structure comprises 125 residues: Small ribosomal subunit protein uS13 (125 aa).

Residues 90–125 form a disordered region; sequence QRHRKGLPVRGQRTKTNARTRKGPKRTVAGKKKATK.

It belongs to the universal ribosomal protein uS13 family. Part of the 30S ribosomal subunit. Forms a loose heterodimer with protein S19. Forms two bridges to the 50S subunit in the 70S ribosome.

Located at the top of the head of the 30S subunit, it contacts several helices of the 16S rRNA. In the 70S ribosome it contacts the 23S rRNA (bridge B1a) and protein L5 of the 50S subunit (bridge B1b), connecting the 2 subunits; these bridges are implicated in subunit movement. Contacts the tRNAs in the A and P-sites. The chain is Small ribosomal subunit protein uS13 from Bifidobacterium adolescentis (strain ATCC 15703 / DSM 20083 / NCTC 11814 / E194a).